The primary structure comprises 251 residues: MPSVTMRDMLKAGVHFGHQTRFWNPKMKPYIFGARNKIHIVNLEKTLPLFNDALGFVNKLASSNNTILFVGTKRAAQKAVAEEATRCGMPYVDHRWLGGMLTNWKTIRQSIKRFRDLEAQANDGTFDKLTKKEALMRRREMEKLERSIGGIKDMGGLPDALFVIDVDHEDIAVQEARKLGIPVIAVVDTNSNPDGVDYFIPGNDDAIRAIQLYVGAVADAIIEGRQYAATQAPGGDSDGFVEVEEAGEAQA.

It belongs to the universal ribosomal protein uS2 family.

This chain is Small ribosomal subunit protein uS2 (rpsB), found in Arthrospira platensis (Spirulina platensis).